A 70-amino-acid chain; its full sequence is MDQLERRIEDLEMKLAFQEGTIEELDQQVIKLNDLMAAQQQQLRILITKLQSVEPSNMANQSEESPPPHY.

The protein belongs to the SlyX family.

This is Protein SlyX homolog from Shewanella sediminis (strain HAW-EB3).